Reading from the N-terminus, the 373-residue chain is Chorismate synthase (373 aa).

NADP(+) is bound by residues Arg-48 and Arg-54. FMN is bound by residues 131 to 133 (RSS), 243 to 244 (NA), Gly-288, 303 to 307 (KPTSS), and Arg-329.

This sequence belongs to the chorismate synthase family. Homotetramer. FMNH2 serves as cofactor.

The catalysed reaction is 5-O-(1-carboxyvinyl)-3-phosphoshikimate = chorismate + phosphate. It participates in metabolic intermediate biosynthesis; chorismate biosynthesis; chorismate from D-erythrose 4-phosphate and phosphoenolpyruvate: step 7/7. Its function is as follows. Catalyzes the anti-1,4-elimination of the C-3 phosphate and the C-6 proR hydrogen from 5-enolpyruvylshikimate-3-phosphate (EPSP) to yield chorismate, which is the branch point compound that serves as the starting substrate for the three terminal pathways of aromatic amino acid biosynthesis. This reaction introduces a second double bond into the aromatic ring system. The polypeptide is Chorismate synthase (Beijerinckia indica subsp. indica (strain ATCC 9039 / DSM 1715 / NCIMB 8712)).